The sequence spans 343 residues: Zinc finger protein Gfi-1b (343 aa).

Positions 1 to 20 (MPRSFLVKSKKTHTYNQHRY) are mediates repression of transcription. Residues 1 to 20 (MPRSFLVKSKKTHTYNQHRY) form an SNAG domain region. The tract at residues 51 to 77 (STDPTEKQHTPENVITEEARSDPGDPR) is disordered. The span at 67-77 (EEARSDPGDPR) shows a compositional bias: basic and acidic residues. 6 consecutive C2H2-type zinc fingers follow at residues 176 to 199 (YHCVKCSKVFSTSHGLEVHVRRSH), 205 to 227 (FVCNICGKSFGHAVSLEQHLNVH), 233 to 255 (FECKMCGKTFKRSSTLSTHLLIH), 261 to 283 (YPCQFCGKRFHQKSDMKKHTYIH), 289 to 311 (HKCQVCGKAFSQSSNLITHSRKH), and 317 to 340 (FSCDLCCKGFQRKVDLRRHRENQH).

The protein localises to the nucleus. In terms of biological role, essential transcriptional regulator necessary for development and differentiation of erythroid and megakaryocytic lineages. Alters histone methylation by recruiting histone methyltransferase to target genes promoters. Plays a role in heterochromatin formation. This chain is Zinc finger protein Gfi-1b (gfi1b), found in Xenopus laevis (African clawed frog).